Consider the following 324-residue polypeptide: NADH-quinone oxidoreductase subunit H (324 aa).

The next 8 helical transmembrane spans lie at 11 to 31 (ILIT…CGAF), 81 to 101 (VIFT…FAIV), 114 to 134 (IGIL…LFAG), 154 to 174 (VSYE…AGSF), 186 to 206 (LWNV…GVAV), 237 to 257 (FFVG…TLFF), 264 to 284 (ILPP…MFIL), and 304 to 324 (VCLP…LYNA).

This sequence belongs to the complex I subunit 1 family. In terms of assembly, NDH-1 is composed of 13 different subunits. Subunits NuoA, H, J, K, L, M, N constitute the membrane sector of the complex.

It localises to the cell inner membrane. It carries out the reaction a quinone + NADH + 5 H(+)(in) = a quinol + NAD(+) + 4 H(+)(out). Its function is as follows. NDH-1 shuttles electrons from NADH, via FMN and iron-sulfur (Fe-S) centers, to quinones in the respiratory chain. The immediate electron acceptor for the enzyme in this species is believed to be ubiquinone. Couples the redox reaction to proton translocation (for every two electrons transferred, four hydrogen ions are translocated across the cytoplasmic membrane), and thus conserves the redox energy in a proton gradient. This subunit may bind ubiquinone. The protein is NADH-quinone oxidoreductase subunit H of Pectobacterium carotovorum subsp. carotovorum (strain PC1).